Consider the following 283-residue polypeptide: Bifunctional protein FolD 2 (283 aa).

NADP(+) is bound by residues glycine 165–serine 167, serine 190, and isoleucine 231.

Belongs to the tetrahydrofolate dehydrogenase/cyclohydrolase family. As to quaternary structure, homodimer.

The enzyme catalyses (6R)-5,10-methylene-5,6,7,8-tetrahydrofolate + NADP(+) = (6R)-5,10-methenyltetrahydrofolate + NADPH. It catalyses the reaction (6R)-5,10-methenyltetrahydrofolate + H2O = (6R)-10-formyltetrahydrofolate + H(+). Its pathway is one-carbon metabolism; tetrahydrofolate interconversion. In terms of biological role, catalyzes the oxidation of 5,10-methylenetetrahydrofolate to 5,10-methenyltetrahydrofolate and then the hydrolysis of 5,10-methenyltetrahydrofolate to 10-formyltetrahydrofolate. This chain is Bifunctional protein FolD 2, found in Bordetella pertussis (strain Tohama I / ATCC BAA-589 / NCTC 13251).